The following is a 409-amino-acid chain: Elongation factor Tu (409 aa).

Residues 10 to 214 form the tr-type G domain; that stretch reads KPHVNVGTIG…AVDSYIPTPE (205 aa). The tract at residues 19 to 26 is G1; that stretch reads GHVDHGKT. 19-26 serves as a coordination point for GTP; sequence GHVDHGKT. Mg(2+) is bound at residue T26. The interval 60 to 64 is G2; sequence GITIN. Residues 81-84 form a G3 region; that stretch reads DCPG. GTP contacts are provided by residues 81-85 and 136-139; these read DCPGH and NKVD. The tract at residues 136–139 is G4; it reads NKVD. Residues 174–176 are G5; the sequence is SAL.

The protein belongs to the TRAFAC class translation factor GTPase superfamily. Classic translation factor GTPase family. EF-Tu/EF-1A subfamily. In terms of assembly, monomer.

It localises to the cytoplasm. The catalysed reaction is GTP + H2O = GDP + phosphate + H(+). Functionally, GTP hydrolase that promotes the GTP-dependent binding of aminoacyl-tRNA to the A-site of ribosomes during protein biosynthesis. This is Elongation factor Tu from Synechococcus sp. (strain JA-3-3Ab) (Cyanobacteria bacterium Yellowstone A-Prime).